The following is a 279-amino-acid chain: MTQFDKQYNSIIKDIINNGISDEEFDVRTKWDSDGTPAHTLSVISKQMRFDNSEVPILTTKKVAWKTAIKELLWIWQLKSNDVNDLNMMGVHIWDQWKQEDGTIGHAYGFQLGKKNRSLNGEKVDQVDYLLHQLKNNPSSRRHITMLWNPDELDAMALTPCVYETQWYVKHGKLHLEVRARSNDMALGNPFNVFQYNVLQRMIAQVTGYELGEYIFNIGDCHVYTRHIDNLKIQMEREQFEAPELWINPEVKDFYDFTIDDFKLINYKHGDKLLFEVAV.

DUMP is bound at residue 141–142; that stretch reads RR. Catalysis depends on Cys161, which acts as the Nucleophile. DUMP-binding positions include 181-184, Asn192, and 222-224; these read RSND and HVY. (6R)-5,10-methylene-5,6,7,8-tetrahydrofolate is bound at residue Asp184. Ala278 provides a ligand contact to (6R)-5,10-methylene-5,6,7,8-tetrahydrofolate.

This sequence belongs to the thymidylate synthase family. Bacterial-type ThyA subfamily. In terms of assembly, homodimer.

The protein resides in the cytoplasm. The enzyme catalyses dUMP + (6R)-5,10-methylene-5,6,7,8-tetrahydrofolate = 7,8-dihydrofolate + dTMP. The protein operates within pyrimidine metabolism; dTTP biosynthesis. Catalyzes the reductive methylation of 2'-deoxyuridine-5'-monophosphate (dUMP) to 2'-deoxythymidine-5'-monophosphate (dTMP) while utilizing 5,10-methylenetetrahydrofolate (mTHF) as the methyl donor and reductant in the reaction, yielding dihydrofolate (DHF) as a by-product. This enzymatic reaction provides an intracellular de novo source of dTMP, an essential precursor for DNA biosynthesis. The protein is Thymidylate synthase 1 of Bacillus subtilis (strain 168).